The sequence spans 417 residues: Serine--tRNA ligase (417 aa).

226–228 (TSE) contributes to the L-serine binding site. ATP is bound by residues 257 to 259 (RRE) and valine 273. L-serine is bound at residue glutamate 280. Residue 344–347 (EVTS) participates in ATP binding. Residue threonine 379 coordinates L-serine.

This sequence belongs to the class-II aminoacyl-tRNA synthetase family. Type-1 seryl-tRNA synthetase subfamily. As to quaternary structure, homodimer. The tRNA molecule binds across the dimer.

The protein resides in the cytoplasm. It catalyses the reaction tRNA(Ser) + L-serine + ATP = L-seryl-tRNA(Ser) + AMP + diphosphate + H(+). It carries out the reaction tRNA(Sec) + L-serine + ATP = L-seryl-tRNA(Sec) + AMP + diphosphate + H(+). It functions in the pathway aminoacyl-tRNA biosynthesis; selenocysteinyl-tRNA(Sec) biosynthesis; L-seryl-tRNA(Sec) from L-serine and tRNA(Sec): step 1/1. Catalyzes the attachment of serine to tRNA(Ser). Is also able to aminoacylate tRNA(Sec) with serine, to form the misacylated tRNA L-seryl-tRNA(Sec), which will be further converted into selenocysteinyl-tRNA(Sec). The sequence is that of Serine--tRNA ligase from Tropheryma whipplei (strain Twist) (Whipple's bacillus).